The sequence spans 87 residues: Small ribosomal subunit protein bS18 (87 aa).

Belongs to the bacterial ribosomal protein bS18 family. In terms of assembly, part of the 30S ribosomal subunit. Forms a tight heterodimer with protein bS6.

In terms of biological role, binds as a heterodimer with protein bS6 to the central domain of the 16S rRNA, where it helps stabilize the platform of the 30S subunit. The protein is Small ribosomal subunit protein bS18 of Nitratidesulfovibrio vulgaris (strain ATCC 29579 / DSM 644 / CCUG 34227 / NCIMB 8303 / VKM B-1760 / Hildenborough) (Desulfovibrio vulgaris).